Consider the following 506-residue polypeptide: Tabersonine 6,7-epoxidase isoform 1 (506 aa).

A helical membrane pass occupies residues 1–21 (MEFVVSLFAFVVSCFILLKVA). Residues asparagine 173 and asparagine 261 are each glycosylated (N-linked (GlcNAc...) asparagine). Residue cysteine 441 coordinates heme.

Belongs to the cytochrome P450 family. The cofactor is heme. Mainly expressed in roots.

Its subcellular location is the endoplasmic reticulum membrane. The enzyme catalyses (-)-tabersonine + reduced [NADPH--hemoprotein reductase] + O2 = lochnericine + oxidized [NADPH--hemoprotein reductase] + H2O + H(+). Its pathway is alkaloid biosynthesis. In terms of biological role, component of the monoterpenoid indole alkaloids (MIAs, e.g. echitovenine, tabersonine, lochnericine, 19-hydroxytabersonine and horhammericine) biosynthetic pathway; MIAs are used in cancer treatment and other medical applications. Cytochrome P450 catalyzing the conversion of tabersonine to lochnericine. The sequence is that of Tabersonine 6,7-epoxidase isoform 1 from Catharanthus roseus (Madagascar periwinkle).